A 114-amino-acid chain; its full sequence is Prefoldin subunit 6 (114 aa).

Ser-2 carries the N-acetylserine modification.

Belongs to the prefoldin subunit beta family. In terms of assembly, heterohexamer of two PFD-alpha type and four PFD-beta type subunits.

The protein resides in the nucleus. Functionally, binds specifically to cytosolic chaperonin (c-CPN) and transfers target proteins to it. Binds to nascent polypeptide chain and promotes folding in an environment in which there are many competing pathways for nonnative proteins. The sequence is that of Prefoldin subunit 6 (YKE2) from Saccharomyces cerevisiae (strain ATCC 204508 / S288c) (Baker's yeast).